The primary structure comprises 124 residues: Small ribosomal subunit protein uS12 (124 aa).

Residue aspartate 90 is modified to 3-methylthioaspartic acid.

It belongs to the universal ribosomal protein uS12 family. In terms of assembly, part of the 30S ribosomal subunit. Contacts proteins S8 and S17. May interact with IF1 in the 30S initiation complex.

In terms of biological role, with S4 and S5 plays an important role in translational accuracy. Functionally, interacts with and stabilizes bases of the 16S rRNA that are involved in tRNA selection in the A site and with the mRNA backbone. Located at the interface of the 30S and 50S subunits, it traverses the body of the 30S subunit contacting proteins on the other side and probably holding the rRNA structure together. The combined cluster of proteins S8, S12 and S17 appears to hold together the shoulder and platform of the 30S subunit. The protein is Small ribosomal subunit protein uS12 of Wolbachia sp. subsp. Drosophila simulans (strain wRi).